Here is a 220-residue protein sequence, read N- to C-terminus: MFSEHLPSSSSQVFQEHFIDSFVSRKLLQQIPFAHNAQQAHVPDKNNLSGNVLMLLSILLCGIICSLGLHYIIRCAFIRSRSFMISDPISIPSTPRDSSVNKGIKKKALKMLPVVNYSPEINLPGVGEECVICLSDFVAGEQLRVLPKCNHGFHLRCIDKWLTQHMTCPKCRHCLVDTCQKVLSDCDAADQVAATATESIDIRISPLEPEARVATFRESS.

The chain crosses the membrane as a helical span at residues 53 to 73 (LMLLSILLCGIICSLGLHYII). The RING-type; atypical zinc-finger motif lies at 130–172 (CVICLSDFVAGEQLRVLPKCNHGFHLRCIDKWLTQHMTCPKCR).

The protein belongs to the RING-type zinc finger family. ATL subfamily.

It is found in the membrane. The catalysed reaction is S-ubiquitinyl-[E2 ubiquitin-conjugating enzyme]-L-cysteine + [acceptor protein]-L-lysine = [E2 ubiquitin-conjugating enzyme]-L-cysteine + N(6)-ubiquitinyl-[acceptor protein]-L-lysine.. Its pathway is protein modification; protein ubiquitination. The polypeptide is RING-H2 finger protein ATL77 (ATL77) (Arabidopsis thaliana (Mouse-ear cress)).